Consider the following 78-residue polypeptide: Molt-inhibiting hormone (78 aa).

Cystine bridges form between cysteine 7–cysteine 44, cysteine 24–cysteine 40, and cysteine 27–cysteine 53.

The protein localises to the secreted. Inhibits Y-organs where molting hormone (ecdysteroid) is secreted. A molting cycle is initiated when MIH secretion diminishes or stops. Also has significant hyperglycemic hormone (CHH) activity. This Cancer pagurus (Rock crab) protein is Molt-inhibiting hormone.